Here is a 62-residue protein sequence, read N- to C-terminus: Large ribosomal subunit protein bL28 (62 aa).

Residues 1 to 27 are disordered; that stretch reads MARECYITGRKARSGNKRSHAMNKSKR. Over residues 10 to 27 the composition is skewed to basic residues; it reads RKARSGNKRSHAMNKSKR.

It belongs to the bacterial ribosomal protein bL28 family.

This Shouchella clausii (strain KSM-K16) (Alkalihalobacillus clausii) protein is Large ribosomal subunit protein bL28.